A 275-amino-acid polypeptide reads, in one-letter code: U6 snRNA phosphodiesterase 1 (275 aa).

The segment at methionine 1–asparagine 25 is disordered. Residue histidine 122 is the Proton acceptor of the active site. AMP contacts are provided by residues histidine 122 to serine 124, tyrosine 206, and asparagine 208 to serine 214. UMP contacts are provided by residues tyrosine 206 and glutamate 210–serine 214. Residue histidine 212 is the Proton donor of the active site.

It belongs to the 2H phosphoesterase superfamily. USB1 family.

Its subcellular location is the nucleus. The catalysed reaction is a 3'-end uridylyl-uridine-RNA = a 3'-end 2',3'-cyclophospho-uridine-RNA + uridine. In terms of biological role, 3'-5' RNA exonuclease that trims the 3' end of oligo(U) tracts of the pre-U6 small nuclear RNA (snRNA) molecule, leading to the formation of a mature U6 snRNA 3' end-terminated with a 2',3'-cyclic phosphate. Participates in the U6 snRNA 3' end processing that prevents U6 snRNA degradation. This chain is U6 snRNA phosphodiesterase 1, found in Dictyostelium discoideum (Social amoeba).